Reading from the N-terminus, the 462-residue chain is Arginine biosynthesis bifunctional protein ArgJ, mitochondrial (462 aa).

Positions 200, 228, 239, 326, 457, and 462 each coordinate substrate. Residue Thr239 is the Nucleophile of the active site.

The protein belongs to the ArgJ family. In terms of assembly, heterodimer of an alpha and a beta chain. In terms of processing, the alpha and beta chains are autoproteolytically processed from a single precursor protein within the mitochondrion.

It localises to the mitochondrion matrix. The catalysed reaction is N(2)-acetyl-L-ornithine + L-glutamate = N-acetyl-L-glutamate + L-ornithine. The enzyme catalyses L-glutamate + acetyl-CoA = N-acetyl-L-glutamate + CoA + H(+). Its pathway is amino-acid biosynthesis; L-arginine biosynthesis; L-ornithine and N-acetyl-L-glutamate from L-glutamate and N(2)-acetyl-L-ornithine (cyclic): step 1/1. The protein operates within amino-acid biosynthesis; L-arginine biosynthesis; N(2)-acetyl-L-ornithine from L-glutamate: step 1/4. Catalyzes two activities which are involved in the cyclic version of arginine biosynthesis: the synthesis of acetylglutamate from glutamate and acetyl-CoA, and of ornithine by transacetylation between acetylornithine and glutamate. The chain is Arginine biosynthesis bifunctional protein ArgJ, mitochondrial from Pyrenophora tritici-repentis (strain Pt-1C-BFP) (Wheat tan spot fungus).